The following is a 246-amino-acid chain: MKALIIDDEPLARNELTYLLNEIGGFEEINEAENVKETLEALLINQYDIIFLDVNLMDENGIELGAKIQKMKEPPAIIFATAHDQYAVQAFELNATDYILKPFGQKRIEQAVNKVRATKAKDDNSANAIVNDMSANFDQSLPVEIDDKIHMLKQQNIIGIGTHNGITTIHTTNHKYETTEPLNRYEKRLNPTYFIRIHRSYIINTKHIKEVQQWFNYTYMVILTNGVKMQVGRSFMKDFKASIGLL.

Positions 2-116 constitute a Response regulatory domain; that stretch reads KALIIDDEPL…RIEQAVNKVR (115 aa). Asp53 is modified (4-aspartylphosphate). Positions 141–245 constitute an HTH LytTR-type domain; that stretch reads LPVEIDDKIH…MKDFKASIGL (105 aa).

As to quaternary structure, homodimer; when phosphorylated. In terms of processing, phosphorylated and dephosphorylated by LytS.

The protein resides in the cytoplasm. Its function is as follows. Member of the two-component regulatory system LytR/LytS that regulates genes involved in autolysis, programmed cell death, biofilm formation and cell wall metabolism. Also participates in sensing and responding to host defense cationic antimicrobial peptides (HDPs). Upon phosphorylation by LytS, functions as a transcription regulator by direct binding to promoter regions of target genes including lrgA and lrgB, to positively regulate their expression. The protein is Transcriptional regulatory protein LytR (lytR) of Staphylococcus aureus (strain bovine RF122 / ET3-1).